The sequence spans 433 residues: Myricetin 3-O-glucosyl 1,2-rhamnoside 6'-O-caffeoyltransferase AT1 (433 aa).

Active-site proton acceptor residues include His157 and Asp375.

Belongs to the plant acyltransferase family. In terms of tissue distribution, expressed in young cromes.

It catalyses the reaction myricetin 3-O-[beta-D-glucosyl-(1-&gt;2)-alpha-L-rhamnoside] + (E)-caffeoyl-CoA = myricetin 3-O-[(6-O-(E)-caffeoyl-beta-D-glucosyl)-(1-&gt;2)-alpha-L-rhamnoside] + CoA. Its pathway is flavonoid metabolism. Its function is as follows. Caffeoyltransferase involved in montbretin A (MbA) biosynthesis. Catalyzes the caffeoylation of myricetin 3-O-beta-D-glucosyl 1,2-alpha-L-rhamnoside (MRG) to produce myricetin 3-O-(6'-O-caffeoyl)-beta-D-glucosyl 1,2-alpha-L-rhamnoside (mini-MbA), a precursor of MbA. Mini-MbA and MbA are potent inhibitors of human pancreatic alpha-amylase and are being developed as drug candidates to treat type-2 diabetes. In vitro, is able to catalyze the caffeoylation of quercetin 3-O-sophoroside (QGG), although QGG may not be a physiological substrate in vivo. In vitro, can use coumaryl-CoA, feruloyl-CoA and acetyl-CoA, although these three acyl donors may not be physiological in vivo. This is Myricetin 3-O-glucosyl 1,2-rhamnoside 6'-O-caffeoyltransferase AT1 from Crocosmia x crocosmiiflora (Montbretia).